The following is a 91-amino-acid chain: Small ribosomal subunit protein uS19 (91 aa).

The protein belongs to the universal ribosomal protein uS19 family.

In terms of biological role, protein S19 forms a complex with S13 that binds strongly to the 16S ribosomal RNA. This chain is Small ribosomal subunit protein uS19, found in Synechococcus sp. (strain CC9605).